Consider the following 468-residue polypeptide: ATP synthase subunit beta (468 aa).

155-162 (GGAGVGKT) serves as a coordination point for ATP.

It belongs to the ATPase alpha/beta chains family. In terms of assembly, F-type ATPases have 2 components, CF(1) - the catalytic core - and CF(0) - the membrane proton channel. CF(1) has five subunits: alpha(3), beta(3), gamma(1), delta(1), epsilon(1). CF(0) has three main subunits: a(1), b(2) and c(9-12). The alpha and beta chains form an alternating ring which encloses part of the gamma chain. CF(1) is attached to CF(0) by a central stalk formed by the gamma and epsilon chains, while a peripheral stalk is formed by the delta and b chains.

The protein resides in the cell membrane. The catalysed reaction is ATP + H2O + 4 H(+)(in) = ADP + phosphate + 5 H(+)(out). Produces ATP from ADP in the presence of a proton gradient across the membrane. The catalytic sites are hosted primarily by the beta subunits. The protein is ATP synthase subunit beta of Streptococcus pyogenes serotype M6 (strain ATCC BAA-946 / MGAS10394).